Here is a 255-residue protein sequence, read N- to C-terminus: uncharacterized protein (255 aa).

The 56-residue stretch at 3–58 folds into the HTH deoR-type domain; sequence PVERRQIILEMVAEKGIVSIAELTDRMNVSHMTIRRDLQKLEQQGAVVLVSGGVQS. A DNA-binding region (H-T-H motif) is located at residues 20–39; it reads VSIAELTDRMNVSHMTIRRD.

This is an uncharacterized protein from Escherichia coli (strain K12).